A 277-amino-acid chain; its full sequence is Large ribosomal subunit protein uL2 (277 aa).

A disordered region spans residues Val227 to Lys277. Residues Lys266–Lys277 show a composition bias toward basic and acidic residues.

Belongs to the universal ribosomal protein uL2 family. In terms of assembly, part of the 50S ribosomal subunit. Forms a bridge to the 30S subunit in the 70S ribosome.

Functionally, one of the primary rRNA binding proteins. Required for association of the 30S and 50S subunits to form the 70S ribosome, for tRNA binding and peptide bond formation. It has been suggested to have peptidyltransferase activity; this is somewhat controversial. Makes several contacts with the 16S rRNA in the 70S ribosome. The polypeptide is Large ribosomal subunit protein uL2 (Magnetococcus marinus (strain ATCC BAA-1437 / JCM 17883 / MC-1)).